Reading from the N-terminus, the 334-residue chain is Glyceraldehyde-3-phosphate dehydrogenase (334 aa).

NAD(+) is bound by residues 10–11 (RI), D33, K77, and T119. Residues 149 to 151 (SCT), T180, 209 to 210 (TG), and R232 contribute to the D-glyceraldehyde 3-phosphate site. The active-site Nucleophile is C150. N314 serves as a coordination point for NAD(+).

This sequence belongs to the glyceraldehyde-3-phosphate dehydrogenase family. As to quaternary structure, homotetramer.

The protein localises to the cytoplasm. It catalyses the reaction D-glyceraldehyde 3-phosphate + phosphate + NAD(+) = (2R)-3-phospho-glyceroyl phosphate + NADH + H(+). Its pathway is carbohydrate degradation; glycolysis; pyruvate from D-glyceraldehyde 3-phosphate: step 1/5. Catalyzes the oxidative phosphorylation of glyceraldehyde 3-phosphate (G3P) to 1,3-bisphosphoglycerate (BPG) using the cofactor NAD. The first reaction step involves the formation of a hemiacetal intermediate between G3P and a cysteine residue, and this hemiacetal intermediate is then oxidized to a thioester, with concomitant reduction of NAD to NADH. The reduced NADH is then exchanged with the second NAD, and the thioester is attacked by a nucleophilic inorganic phosphate to produce BPG. In Chlamydia trachomatis serovar L2 (strain ATCC VR-902B / DSM 19102 / 434/Bu), this protein is Glyceraldehyde-3-phosphate dehydrogenase (gap).